Consider the following 424-residue polypeptide: MFIDTAKILVKSGNGGNGCISFRREKYVAMGGPNGGDGGNGGSVILVADRNLTTLLDFTYRRKYVADNGEDGGNSKCFGKKGEDLYIKVPIGTVVKDVETGKTMVDLAKEGDSYIVARGGKGGKGNYHFATPTRQAPNFAEPGMPGEERMINLEIKLLADVGLIGFPNVGKSTLLSMVSKAKPKIANYHFTTLKPNLGVVKIEGANAFVMADIPGIIEGASEGVGLGLDFLRHIERTRLLVHVVDISGVEGRNPIEDFKKINEELKNYSVKLWDRPQIVVANKIDMLYDEEVFETFKKEVNKLGFDKVFKISAATRDGVDDLIKEVTRQLSMIPITEMEIPEEERFMPEEKRFTYTIRVEDGVYVVEGSFVDRLLKSVNVNDPDSLRYFHKVLRNKGILDELKEMGIQDEDTVRLNDFEFDFLL.

The 158-residue stretch at 1–158 (MFIDTAKILV…RMINLEIKLL (158 aa)) folds into the Obg domain. Positions 159–331 (ADVGLIGFPN…LIKEVTRQLS (173 aa)) constitute an OBG-type G domain. GTP is bound by residues 165-172 (GFPNVGKS), 190-194 (FTTLK), 212-215 (DIPG), 282-285 (NKID), and 312-314 (SAA). Residues Ser-172 and Thr-192 each coordinate Mg(2+). Residues 345–424 (RFMPEEKRFT…LNDFEFDFLL (80 aa)) form the OCT domain.

Belongs to the TRAFAC class OBG-HflX-like GTPase superfamily. OBG GTPase family. In terms of assembly, monomer. Mg(2+) serves as cofactor.

Its subcellular location is the cytoplasm. An essential GTPase which binds GTP, GDP and possibly (p)ppGpp with moderate affinity, with high nucleotide exchange rates and a fairly low GTP hydrolysis rate. Plays a role in control of the cell cycle, stress response, ribosome biogenesis and in those bacteria that undergo differentiation, in morphogenesis control. This Clostridium novyi (strain NT) protein is GTPase Obg.